A 343-amino-acid chain; its full sequence is Protein RecA (343 aa).

65 to 72 provides a ligand contact to ATP; that stretch reads GPESSGKT.

It belongs to the RecA family.

It localises to the cytoplasm. Functionally, can catalyze the hydrolysis of ATP in the presence of single-stranded DNA, the ATP-dependent uptake of single-stranded DNA by duplex DNA, and the ATP-dependent hybridization of homologous single-stranded DNAs. It interacts with LexA causing its activation and leading to its autocatalytic cleavage. In Pseudoalteromonas atlantica (strain T6c / ATCC BAA-1087), this protein is Protein RecA.